Reading from the N-terminus, the 130-residue chain is Sirohydrochlorin cobaltochelatase (130 aa).

Histidine 12 functions as the Proton acceptor in the catalytic mechanism. Histidine 12 serves as a coordination point for Co(2+). Position 12 (histidine 12) interacts with Ni(2+). Substrate is bound by residues glutamate 48 and 73-78 (LASGVH). Position 78 (histidine 78) interacts with Co(2+). Position 78 (histidine 78) interacts with Ni(2+).

The protein belongs to the CbiX family. CbiXS subfamily. In terms of assembly, homotetramer; dimer of dimers.

The enzyme catalyses Co-sirohydrochlorin + 2 H(+) = sirohydrochlorin + Co(2+). It carries out the reaction Ni-sirohydrochlorin + 2 H(+) = sirohydrochlorin + Ni(2+). Its pathway is cofactor biosynthesis; adenosylcobalamin biosynthesis; cob(II)yrinate a,c-diamide from sirohydrochlorin (anaerobic route): step 1/10. Its function is as follows. Catalyzes the insertion of Co(2+) into sirohydrochlorin as part of the anaerobic pathway to cobalamin biosynthesis. Involved in the biosynthesis of the unique nickel-containing tetrapyrrole coenzyme F430, the prosthetic group of methyl-coenzyme M reductase (MCR), which plays a key role in methanogenesis and anaerobic methane oxidation. Catalyzes the insertion of Ni(2+) into sirohydrochlorin to yield Ni-sirohydrochlorin. The protein is Sirohydrochlorin cobaltochelatase of Methanosarcina barkeri (strain Fusaro / DSM 804).